Consider the following 433-residue polypeptide: Enolase (433 aa).

Glutamine 164 is a (2R)-2-phosphoglycerate binding site. The Proton donor role is filled by glutamate 206. Residues aspartate 243, glutamate 289, and aspartate 316 each coordinate Mg(2+). (2R)-2-phosphoglycerate contacts are provided by lysine 341, arginine 370, serine 371, and lysine 392. The Proton acceptor role is filled by lysine 341.

The protein belongs to the enolase family. The cofactor is Mg(2+).

Its subcellular location is the cytoplasm. The protein localises to the secreted. It is found in the cell surface. The catalysed reaction is (2R)-2-phosphoglycerate = phosphoenolpyruvate + H2O. The protein operates within carbohydrate degradation; glycolysis; pyruvate from D-glyceraldehyde 3-phosphate: step 4/5. In terms of biological role, catalyzes the reversible conversion of 2-phosphoglycerate (2-PG) into phosphoenolpyruvate (PEP). It is essential for the degradation of carbohydrates via glycolysis. The sequence is that of Enolase from Borrelia hermsii (strain HS1 / DAH).